A 462-amino-acid polypeptide reads, in one-letter code: L-seryl-tRNA(Sec) selenium transferase (462 aa).

Residue Lys295 is modified to N6-(pyridoxal phosphate)lysine.

Belongs to the SelA family. In terms of assembly, homodecamer; pentamer of dimers. Binds only one seryl-tRNA(Sec) per dimer. Pyridoxal 5'-phosphate is required as a cofactor.

It is found in the cytoplasm. The catalysed reaction is L-seryl-tRNA(Sec) + selenophosphate + H(+) = L-selenocysteinyl-tRNA(Sec) + phosphate. The protein operates within aminoacyl-tRNA biosynthesis; selenocysteinyl-tRNA(Sec) biosynthesis; selenocysteinyl-tRNA(Sec) from L-seryl-tRNA(Sec) (bacterial route): step 1/1. Converts seryl-tRNA(Sec) to selenocysteinyl-tRNA(Sec) required for selenoprotein biosynthesis. The protein is L-seryl-tRNA(Sec) selenium transferase of Klebsiella pneumoniae (strain 342).